The following is a 218-amino-acid chain: Adenylate kinase (218 aa).

10-15 provides a ligand contact to ATP; sequence GAGKGT. Residues 30-59 are NMP; it reads STGDMLRAAVKAGTPLGLQAKAVMDAGQLV. Residues Thr-31, Arg-36, 57–59, 85–88, and Gln-92 each bind AMP; these read QLV and GFPR. Positions 122 to 159 are LID; it reads GRRSHPASGRTYHVKFNPPKVEGKDDVTGEPLVQREDD. ATP is bound by residues Arg-123 and 132–133; that span reads TY. The segment at 127 to 150 is disordered; sequence PASGRTYHVKFNPPKVEGKDDVTG. Residues Arg-156 and Arg-167 each coordinate AMP. Gly-203 serves as a coordination point for ATP.

This sequence belongs to the adenylate kinase family. In terms of assembly, monomer.

The protein resides in the cytoplasm. The enzyme catalyses AMP + ATP = 2 ADP. Its pathway is purine metabolism; AMP biosynthesis via salvage pathway; AMP from ADP: step 1/1. In terms of biological role, catalyzes the reversible transfer of the terminal phosphate group between ATP and AMP. Plays an important role in cellular energy homeostasis and in adenine nucleotide metabolism. This Acidovorax ebreus (strain TPSY) (Diaphorobacter sp. (strain TPSY)) protein is Adenylate kinase.